Consider the following 283-residue polypeptide: S-adenosylmethionine mitochondrial carrier protein homolog (283 aa).

3 Solcar repeats span residues 11–84 (LKFF…GKQF), 93–178 (DSPY…FKLQ), and 187–275 (STPF…TTRI). Transmembrane regions (helical) follow at residues 14 to 34 (FHAL…LFPI), 55 to 75 (GIYK…ALFF), 99 to 119 (MAAA…VEIA), 152 to 172 (RGFG…FPLW), 190 to 210 (FSVA…TTPL), and 248 to 268 (FAGF…FFGF).

Belongs to the mitochondrial carrier (TC 2.A.29) family.

The protein localises to the mitochondrion inner membrane. Functionally, mitochondrial solute carriers shuttle metabolites, nucleotides, and cofactors through the mitochondrial inner membrane. May mediate the transport of S-adenosylmethionine (SAM) into the mitochondria. The sequence is that of S-adenosylmethionine mitochondrial carrier protein homolog from Drosophila melanogaster (Fruit fly).